The following is a 173-amino-acid chain: Probable glutathione peroxidase 5 (173 aa).

Gly-2 is lipidated: N-myristoyl glycine. Cys-46 is an active-site residue.

The protein belongs to the glutathione peroxidase family. Ubiquitous.

It localises to the cell membrane. It carries out the reaction 2 glutathione + H2O2 = glutathione disulfide + 2 H2O. Its function is as follows. May constitute a glutathione peroxidase-like protective system against oxidative stresses. The protein is Probable glutathione peroxidase 5 (GPX5) of Arabidopsis thaliana (Mouse-ear cress).